The chain runs to 444 residues: Lycopaoctaene synthase (444 aa).

The NADP(+) site is built by Arg48 and Arg73. Residues Asp76, Glu79, and Asp80 each coordinate Mg(2+). Residues Arg215, Lys315, and Arg317 each contribute to the NADP(+) site. 2 helical membrane-spanning segments follow: residues 391-411 (TAMV…AYVY) and 415-435 (GTSL…IGLF).

It belongs to the phytoene/squalene synthase family. Mg(2+) serves as cofactor.

It localises to the membrane. The catalysed reaction is 2 (2E,6E)-farnesyl diphosphate + NADH + H(+) = squalene + 2 diphosphate + NAD(+). The enzyme catalyses 2 (2E,6E)-farnesyl diphosphate + NADPH + H(+) = squalene + 2 diphosphate + NADP(+). It catalyses the reaction 2 (2E,6E,10E)-geranylgeranyl diphosphate + NADPH + H(+) = all-trans-lycopaoctaene + 2 diphosphate + NADP(+). Converts the C20 geranylgeranyl diphosphate (GGPP) to the C40 lycopaoctaene, the first committed intermediate in the production of lycopadiene. Converts farnesyl diphosphate (FPP) into squalene, a precursor for sterol biosynthesis in eukaryotes. Converts with low efficiency the C20 phytyl diphosphate (PPP) to the C40 lycopadiene in vitro. This reaction may not have biological significance in vivo. This is Lycopaoctaene synthase from Botryococcus braunii (Green alga).